A 121-amino-acid chain; its full sequence is Large ribosomal subunit protein uL18 (121 aa).

It belongs to the universal ribosomal protein uL18 family. In terms of assembly, part of the 50S ribosomal subunit; part of the 5S rRNA/L5/L18/L25 subcomplex. Contacts the 5S and 23S rRNAs.

Functionally, this is one of the proteins that bind and probably mediate the attachment of the 5S RNA into the large ribosomal subunit, where it forms part of the central protuberance. The chain is Large ribosomal subunit protein uL18 from Verminephrobacter eiseniae (strain EF01-2).